The sequence spans 429 residues: Glutamyl-tRNA reductase (429 aa).

Substrate contacts are provided by residues 49–52, serine 107, 112–114, and glutamine 118; these read TCNR and EPQ. Cysteine 50 serves as the catalytic Nucleophile. Residue 187–192 participates in NADP(+) binding; the sequence is GAGETI.

It belongs to the glutamyl-tRNA reductase family. As to quaternary structure, homodimer.

It catalyses the reaction (S)-4-amino-5-oxopentanoate + tRNA(Glu) + NADP(+) = L-glutamyl-tRNA(Glu) + NADPH + H(+). It functions in the pathway porphyrin-containing compound metabolism; protoporphyrin-IX biosynthesis; 5-aminolevulinate from L-glutamyl-tRNA(Glu): step 1/2. Functionally, catalyzes the NADPH-dependent reduction of glutamyl-tRNA(Glu) to glutamate 1-semialdehyde (GSA). This is Glutamyl-tRNA reductase from Pseudomonas fluorescens (strain SBW25).